We begin with the raw amino-acid sequence, 306 residues long: Acetyl-coenzyme A carboxylase carboxyl transferase subunit beta (306 aa).

The 270-residue stretch at 27–296 (LWHKCPSCEA…PRFVAPVIEP (270 aa)) folds into the CoA carboxyltransferase N-terminal domain. Zn(2+)-binding residues include C31, C34, C50, and C53. The C4-type zinc finger occupies 31 to 53 (CPSCEAVLYRPELEKTLDVCPKC).

This sequence belongs to the AccD/PCCB family. In terms of assembly, acetyl-CoA carboxylase is a heterohexamer composed of biotin carboxyl carrier protein (AccB), biotin carboxylase (AccC) and two subunits each of ACCase subunit alpha (AccA) and ACCase subunit beta (AccD). Zn(2+) serves as cofactor.

The protein resides in the cytoplasm. The catalysed reaction is N(6)-carboxybiotinyl-L-lysyl-[protein] + acetyl-CoA = N(6)-biotinyl-L-lysyl-[protein] + malonyl-CoA. It participates in lipid metabolism; malonyl-CoA biosynthesis; malonyl-CoA from acetyl-CoA: step 1/1. In terms of biological role, component of the acetyl coenzyme A carboxylase (ACC) complex. Biotin carboxylase (BC) catalyzes the carboxylation of biotin on its carrier protein (BCCP) and then the CO(2) group is transferred by the transcarboxylase to acetyl-CoA to form malonyl-CoA. This is Acetyl-coenzyme A carboxylase carboxyl transferase subunit beta from Pseudomonas savastanoi pv. phaseolicola (strain 1448A / Race 6) (Pseudomonas syringae pv. phaseolicola (strain 1448A / Race 6)).